A 181-amino-acid chain; its full sequence is uncharacterized protein (181 aa).

The first 22 residues, 1–22 (MNKKSLLVVLVIALAVVPFAAT), serve as a signal peptide directing secretion.

This is an uncharacterized protein from Halorubrum pleomorphic virus 1 (HRPV-1).